Consider the following 431-residue polypeptide: Glutamate-1-semialdehyde 2,1-aminomutase 1 (431 aa).

N6-(pyridoxal phosphate)lysine is present on K268.

This sequence belongs to the class-III pyridoxal-phosphate-dependent aminotransferase family. HemL subfamily. As to quaternary structure, homodimer. The cofactor is pyridoxal 5'-phosphate.

It localises to the cytoplasm. The catalysed reaction is (S)-4-amino-5-oxopentanoate = 5-aminolevulinate. It functions in the pathway porphyrin-containing compound metabolism; protoporphyrin-IX biosynthesis; 5-aminolevulinate from L-glutamyl-tRNA(Glu): step 2/2. In Anoxybacillus flavithermus (strain DSM 21510 / WK1), this protein is Glutamate-1-semialdehyde 2,1-aminomutase 1.